The primary structure comprises 261 residues: Ethanolamine ammonia-lyase small subunit (261 aa).

Val157, Glu178, and Cys207 together coordinate adenosylcob(III)alamin.

This sequence belongs to the EutC family. The basic unit is a heterodimer which dimerizes to form tetramers. The heterotetramers trimerize; 6 large subunits form a core ring with 6 small subunits projecting outwards. Adenosylcob(III)alamin is required as a cofactor.

Its subcellular location is the bacterial microcompartment. It carries out the reaction ethanolamine = acetaldehyde + NH4(+). The protein operates within amine and polyamine degradation; ethanolamine degradation. Catalyzes the deamination of various vicinal amino-alcohols to oxo compounds. Allows this organism to utilize ethanolamine as the sole source of nitrogen and carbon in the presence of external vitamin B12. The polypeptide is Ethanolamine ammonia-lyase small subunit (Rhodopseudomonas palustris (strain BisA53)).